We begin with the raw amino-acid sequence, 206 residues long: Large ribosomal subunit protein uL4 (206 aa).

A disordered region spans residues Arg-44–Ser-78. Residues His-58–Gly-70 show a composition bias toward basic residues.

Belongs to the universal ribosomal protein uL4 family. As to quaternary structure, part of the 50S ribosomal subunit.

In terms of biological role, one of the primary rRNA binding proteins, this protein initially binds near the 5'-end of the 23S rRNA. It is important during the early stages of 50S assembly. It makes multiple contacts with different domains of the 23S rRNA in the assembled 50S subunit and ribosome. Functionally, forms part of the polypeptide exit tunnel. The polypeptide is Large ribosomal subunit protein uL4 (Paraburkholderia phytofirmans (strain DSM 17436 / LMG 22146 / PsJN) (Burkholderia phytofirmans)).